The sequence spans 271 residues: MAIAMAVVSFPSLLNKTTLSSSLFTPTFLPAKSSSLLIKSSPKTRFVVSSSMEAGIGVMGSKLGMMSFFEEDGTVVPVTVVGFREGNIVTQIKTLATDGYDAVQIGYRRVRDKKLTKPETGHLQKAGTIPMRHLQEFRLTNIEGFEPNQKLVFDEIFKEGDLVDVAGTTIGKGFQGGIKRHHFKRGQMTHGSKSHRALGSIGAGTTPGRVYKGKKMPGRMGGTRTKIRKLKIVKVDKELNVVMIKGALPGKPGNLLRITPAKIVGVNIPKN.

The N-terminal 49 residues, 1 to 49 (MAIAMAVVSFPSLLNKTTLSSSLFTPTFLPAKSSSLLIKSSPKTRFVVS), are a transit peptide targeting the chloroplast. The segment at 190 to 222 (HGSKSHRALGSIGAGTTPGRVYKGKKMPGRMGG) is disordered.

Belongs to the universal ribosomal protein uL3 family. Part of the 50S ribosomal subunit.

It localises to the plastid. The protein resides in the chloroplast. Functionally, one of the primary rRNA binding proteins, it binds directly near the 3'-end of the 23S rRNA, where it nucleates assembly of the 50S subunit. This chain is Large ribosomal subunit protein uL3c (RPL3A), found in Arabidopsis thaliana (Mouse-ear cress).